Consider the following 474-residue polypeptide: L-arabinose isomerase (474 aa).

Residues Glu306, Glu331, His348, and His447 each contribute to the Mn(2+) site.

Belongs to the arabinose isomerase family. The cofactor is Mn(2+).

The catalysed reaction is beta-L-arabinopyranose = L-ribulose. It participates in carbohydrate degradation; L-arabinose degradation via L-ribulose; D-xylulose 5-phosphate from L-arabinose (bacterial route): step 1/3. Its function is as follows. Catalyzes the conversion of L-arabinose to L-ribulose. This is L-arabinose isomerase from Pediococcus pentosaceus (strain ATCC 25745 / CCUG 21536 / LMG 10740 / 183-1w).